The sequence spans 424 residues: MTILKKKKKGSPQITPDERYRELDSHAQNESEIQEDVPISRKIANFLKLAYNEIRENISIYLLIIVYLCVCVMNKLLAKRTLKKIGNYSFVTSETHNCICMVVFFALYFMFGRRVMSAKERHRNFGVQFLLISLLDACSVIIAFIGLTRTTGNIQSFVMQLSIPINMFFCFLILRYRYHLFNYVGAFIIVVTIAVVEFMLSFETQEENSIVFNLVLIASLIPLSFSNMTREIVFKKYKINILRLNAVVSFFQIFTSCLMLPMYTLPFLKQINLPFSEIGTNIKNGFRCLFLGQNTIVENCGLGMSKMCDDCEGAWKTFIAYSFFNICDNLITSFIIEKFSTMTYTIVSCIQGPAIAIAYYFKFLAGDAVMQPRMLDFVTLFGYLFGSIIYRIGNIILEKKRMMEAGNDDDSEGELTNADSIITH.

The span at 1 to 10 shows a compositional bias: basic residues; sequence MTILKKKKKG. The segment at 1–32 is disordered; sequence MTILKKKKKGSPQITPDERYRELDSHAQNESE. Over 1-57 the chain is Cytoplasmic; sequence MTILKKKKKGSPQITPDERYRELDSHAQNESEIQEDVPISRKIANFLKLAYNEIREN. Positions 16-29 are enriched in basic and acidic residues; sequence PDERYRELDSHAQN. The helical transmembrane segment at 58 to 78 threads the bilayer; it reads ISIYLLIIVYLCVCVMNKLLA. At 79–89 the chain is on the vacuolar side; that stretch reads KRTLKKIGNYS. N-linked (GlcNAc...) asparagine glycosylation is present at N87. Residues 90 to 110 form a helical membrane-spanning segment; sequence FVTSETHNCICMVVFFALYFM. Topologically, residues 111–124 are cytoplasmic; that stretch reads FGRRVMSAKERHRN. The helical transmembrane segment at 125-145 threads the bilayer; the sequence is FGVQFLLISLLDACSVIIAFI. Over 146–153 the chain is Vacuolar; the sequence is GLTRTTGN. The helical transmembrane segment at 154–174 threads the bilayer; it reads IQSFVMQLSIPINMFFCFLIL. At 175–179 the chain is on the cytoplasmic side; the sequence is RYRYH. The chain crosses the membrane as a helical span at residues 180–200; sequence LFNYVGAFIIVVTIAVVEFML. At 201–208 the chain is on the vacuolar side; that stretch reads SFETQEEN. A helical transmembrane segment spans residues 209 to 229; the sequence is SIVFNLVLIASLIPLSFSNMT. Over 230-246 the chain is Cytoplasmic; it reads REIVFKKYKINILRLNA. A helical membrane pass occupies residues 247-267; it reads VVSFFQIFTSCLMLPMYTLPF. Residues 268 to 316 are Vacuolar-facing; it reads LKQINLPFSEIGTNIKNGFRCLFLGQNTIVENCGLGMSKMCDDCEGAWK. 2 disulfide bridges follow: C288–C311 and C300–C308. The helical transmembrane segment at 317–337 threads the bilayer; that stretch reads TFIAYSFFNICDNLITSFIIE. Over 338 to 345 the chain is Cytoplasmic; that stretch reads KFSTMTYT. The chain crosses the membrane as a helical span at residues 346-366; the sequence is IVSCIQGPAIAIAYYFKFLAG. At 367-376 the chain is on the vacuolar side; the sequence is DAVMQPRMLD. Residues 377–397 traverse the membrane as a helical segment; it reads FVTLFGYLFGSIIYRIGNIIL. Over 398–424 the chain is Cytoplasmic; the sequence is EKKRMMEAGNDDDSEGELTNADSIITH.

Belongs to the CRT-like transporter family.

Its subcellular location is the vacuole membrane. In terms of biological role, nutrient transporter. Involved in maintaining the osmotic homeostasis of the digestive vacuole. This chain is Chloroquine resistance transporter, found in Plasmodium vivax (strain Salvador I).